The following is a 364-amino-acid chain: tRNA 2-selenouridine synthase (364 aa).

One can recognise a Rhodanese domain in the interval 14 to 137; sequence LIADTPIIDV…LRQTAIQATI (124 aa). Cys-97 functions as the S-selanylcysteine intermediate in the catalytic mechanism.

The protein belongs to the SelU family. As to quaternary structure, monomer.

The catalysed reaction is 5-methylaminomethyl-2-thiouridine(34) in tRNA + selenophosphate + (2E)-geranyl diphosphate + H2O + H(+) = 5-methylaminomethyl-2-selenouridine(34) in tRNA + (2E)-thiogeraniol + phosphate + diphosphate. The enzyme catalyses 5-methylaminomethyl-2-thiouridine(34) in tRNA + (2E)-geranyl diphosphate = 5-methylaminomethyl-S-(2E)-geranyl-thiouridine(34) in tRNA + diphosphate. It carries out the reaction 5-methylaminomethyl-S-(2E)-geranyl-thiouridine(34) in tRNA + selenophosphate + H(+) = 5-methylaminomethyl-2-(Se-phospho)selenouridine(34) in tRNA + (2E)-thiogeraniol. It catalyses the reaction 5-methylaminomethyl-2-(Se-phospho)selenouridine(34) in tRNA + H2O = 5-methylaminomethyl-2-selenouridine(34) in tRNA + phosphate. Involved in the post-transcriptional modification of the uridine at the wobble position (U34) of tRNA(Lys), tRNA(Glu) and tRNA(Gln). Catalyzes the conversion of 2-thiouridine (S2U-RNA) to 2-selenouridine (Se2U-RNA). Acts in a two-step process involving geranylation of 2-thiouridine (S2U) to S-geranyl-2-thiouridine (geS2U) and subsequent selenation of the latter derivative to 2-selenouridine (Se2U) in the tRNA chain. This chain is tRNA 2-selenouridine synthase, found in Escherichia coli O157:H7.